The primary structure comprises 130 residues: Small ribosomal subunit protein uS9 (130 aa).

The protein belongs to the universal ribosomal protein uS9 family.

This Xanthomonas oryzae pv. oryzae (strain MAFF 311018) protein is Small ribosomal subunit protein uS9.